The sequence spans 26 residues: M-poneritoxin-Ng1d (26 aa).

As to expression, expressed by the venom gland.

The protein resides in the secreted. It localises to the target cell membrane. Has a broad spectrum of activity against both Gram-positive and Gram-negative bacteria and S.cerevisiae. Has insecticidal and hemolytic activities. May act by disrupting the integrity of the bacterial cell membrane. The chain is M-poneritoxin-Ng1d from Neoponera goeldii (Ponerine ant).